Consider the following 427-residue polypeptide: Glycophorin-binding protein-related antigen (427 aa).

8 GBP repeats span residues Leu-109–Glu-149, Thr-150–Glu-189, Ser-190–Glu-229, Thr-230–Thr-269, Ser-270–Glu-307, Thr-308–Glu-347, Thr-348–Glu-387, and Thr-388–Ser-427.

The chain is Glycophorin-binding protein-related antigen (GBPH) from Plasmodium falciparum (isolate FCBR / Columbia).